Here is a 223-residue protein sequence, read N- to C-terminus: Neurotrophic factor BDNF precursor form (223 aa).

A signal peptide spans 1–5; that stretch reads SCMKA. Positions 6–114 are excised as a propeptide; sequence APMKEISIRG…AANMSMRVRR (109 aa). The N-linked (GlcNAc...) asparagine glycan is linked to Asn107. 2 disulfide bridges follow: Cys127-Cys194 and Cys172-Cys223.

The protein belongs to the NGF-beta family.

It localises to the secreted. Its function is as follows. Promotes the survival of neuronal populations that are all located either in the central nervous system or directly connected to it. This chain is Neurotrophic factor BDNF precursor form (BDNF), found in Acrochordus javanicus (Javan wart snake).